Here is a 95-residue protein sequence, read N- to C-terminus: Small ubiquitin-related modifier 2-B (95 aa).

K11 is covalently cross-linked (Glycyl lysine isopeptide (Lys-Gly) (interchain with G-Cter in SUMO)). A Ubiquitin-like domain is found at 16 to 95 (DHINLKVAGQ…VFQQQTGGSY (80 aa)). A Glycyl lysine isopeptide (Gly-Lys) (interchain with K-? in acceptor proteins) cross-link involves residue G93. Positions 94 to 95 (SY) are excised as a propeptide.

The protein belongs to the ubiquitin family. SUMO subfamily. Interacts with sae2 and ube2i. Covalently attached to a number of proteins, including top2. Polymeric chains can be formed through Lys-11 cross-linking. In terms of processing, cleavage of precursor form by a sentrin-specific protease is necessary for function.

Its subcellular location is the nucleus. Functionally, ubiquitin-like protein that can be covalently attached to proteins as a monomer or as a lysine-linked polymer. Covalent attachment via an isopeptide bond to its substrates requires prior activation by the E1 complex sae1-sae2 and linkage to the E2 enzyme ube2i, and can be promoted by an E3 ligase such as pias1-4. This post-translational modification on lysine residues of proteins plays a crucial role in a number of cellular processes such as nuclear transport, DNA replication and repair, mitosis and signal transduction. Polymeric sumo2 chains are also susceptible to polyubiquitination which functions as a signal for proteasomal degradation of modified proteins. The protein is Small ubiquitin-related modifier 2-B (sumo2-b) of Xenopus laevis (African clawed frog).